Here is a 601-residue protein sequence, read N- to C-terminus: Elongation factor 4 (601 aa).

One can recognise a tr-type G domain in the interval 6 to 188; that stretch reads SHIRNFSIIA…QIVHRVPPPE (183 aa). GTP-binding positions include 18 to 23 and 135 to 138; these read DHGKST and NKID.

It belongs to the TRAFAC class translation factor GTPase superfamily. Classic translation factor GTPase family. LepA subfamily.

It localises to the cell inner membrane. The catalysed reaction is GTP + H2O = GDP + phosphate + H(+). Required for accurate and efficient protein synthesis under certain stress conditions. May act as a fidelity factor of the translation reaction, by catalyzing a one-codon backward translocation of tRNAs on improperly translocated ribosomes. Back-translocation proceeds from a post-translocation (POST) complex to a pre-translocation (PRE) complex, thus giving elongation factor G a second chance to translocate the tRNAs correctly. Binds to ribosomes in a GTP-dependent manner. The chain is Elongation factor 4 from Anaeromyxobacter dehalogenans (strain 2CP-C).